Consider the following 555-residue polypeptide: Formate--tetrahydrofolate ligase (555 aa).

Threonine 65 to serine 72 serves as a coordination point for ATP.

The protein belongs to the formate--tetrahydrofolate ligase family.

The enzyme catalyses (6S)-5,6,7,8-tetrahydrofolate + formate + ATP = (6R)-10-formyltetrahydrofolate + ADP + phosphate. It participates in one-carbon metabolism; tetrahydrofolate interconversion. This chain is Formate--tetrahydrofolate ligase, found in Staphylococcus carnosus (strain TM300).